The sequence spans 303 residues: Exosome complex component RRP4 homolog (303 aa).

One can recognise a KH domain in the interval 175 to 213; the sequence is GILIKVPPHLIKKSKKHFHTLPYGMAVIIGCNGSVWVTP.

The protein belongs to the RRP4 family. In terms of assembly, component of the RNA exosome complex. In terms of tissue distribution, ubiquitously expressed.

It is found in the nucleus. The protein resides in the nucleolus. The protein localises to the nucleoplasm. Its function is as follows. Non-catalytic component of the RNA exosome complex which has 3'-&gt;5' exoribonuclease activity and participates in a multitude of cellular RNA processing and degradation events. Involved in regulation of antisense ribosomal siRNA production. Involved in response to cold-warm shock. In Caenorhabditis elegans, this protein is Exosome complex component RRP4 homolog.